The primary structure comprises 180 residues: Adenine phosphoribosyltransferase (180 aa).

It belongs to the purine/pyrimidine phosphoribosyltransferase family. In terms of assembly, homodimer.

It localises to the cytoplasm. The enzyme catalyses AMP + diphosphate = 5-phospho-alpha-D-ribose 1-diphosphate + adenine. Its pathway is purine metabolism; AMP biosynthesis via salvage pathway; AMP from adenine: step 1/1. Functionally, catalyzes a salvage reaction resulting in the formation of AMP, that is energically less costly than de novo synthesis. The sequence is that of Adenine phosphoribosyltransferase from Mycobacterium avium (strain 104).